The primary structure comprises 107 residues: Small ribosomal subunit protein uS10 (107 aa).

This sequence belongs to the universal ribosomal protein uS10 family. Part of the 30S ribosomal subunit.

Involved in the binding of tRNA to the ribosomes. This Deinococcus deserti (strain DSM 17065 / CIP 109153 / LMG 22923 / VCD115) protein is Small ribosomal subunit protein uS10.